A 267-amino-acid polypeptide reads, in one-letter code: 3-methyl-2-oxobutanoate hydroxymethyltransferase (267 aa).

D45 and D84 together coordinate Mg(2+). 3-methyl-2-oxobutanoate is bound by residues 45–46 (DS), D84, and K113. Residue E115 coordinates Mg(2+). E182 functions as the Proton acceptor in the catalytic mechanism.

Belongs to the PanB family. In terms of assembly, homodecamer; pentamer of dimers. Mg(2+) serves as cofactor.

Its subcellular location is the cytoplasm. It catalyses the reaction 3-methyl-2-oxobutanoate + (6R)-5,10-methylene-5,6,7,8-tetrahydrofolate + H2O = 2-dehydropantoate + (6S)-5,6,7,8-tetrahydrofolate. It participates in cofactor biosynthesis; coenzyme A biosynthesis. In terms of biological role, catalyzes the reversible reaction in which hydroxymethyl group from 5,10-methylenetetrahydrofolate is transferred onto alpha-ketoisovalerate to form ketopantoate. In Saccharolobus islandicus (strain L.S.2.15 / Lassen #1) (Sulfolobus islandicus), this protein is 3-methyl-2-oxobutanoate hydroxymethyltransferase.